Here is a 423-residue protein sequence, read N- to C-terminus: ATP-citrate synthase alpha chain protein 2 (423 aa).

Citrate contacts are provided by Asn-343, Thr-345, and Arg-376.

Belongs to the succinate/malate CoA ligase beta subunit family. Heterooctamer of 4 alpha and 4 beta chains.

It localises to the cytoplasm. The protein localises to the cytosol. It catalyses the reaction oxaloacetate + acetyl-CoA + ADP + phosphate = citrate + ATP + CoA. Functionally, ATP citrate-lyase is the primary enzyme responsible for the synthesis of cytosolic acetyl-CoA, used for the elongation of fatty acids and biosynthesis of isoprenoids, flavonoids and malonated derivatives. May supply substrate to the cytosolic acetyl-CoA carboxylase, which generates the malonyl-CoA used for the synthesis of a multitude of compounds, including very long chain fatty acids and flavonoids. In contrast to all known animal ACL enzymes having a homomeric structure, plant ACLs are composed of alpha and beta chains. The sequence is that of ATP-citrate synthase alpha chain protein 2 (ACLA-2) from Oryza sativa subsp. japonica (Rice).